The primary structure comprises 159 residues: Ribosomal RNA large subunit methyltransferase H (159 aa).

S-adenosyl-L-methionine-binding positions include L76, G108, and 127–132; that span reads FSKMTF.

It belongs to the RNA methyltransferase RlmH family. Homodimer.

It localises to the cytoplasm. The catalysed reaction is pseudouridine(1915) in 23S rRNA + S-adenosyl-L-methionine = N(3)-methylpseudouridine(1915) in 23S rRNA + S-adenosyl-L-homocysteine + H(+). In terms of biological role, specifically methylates the pseudouridine at position 1915 (m3Psi1915) in 23S rRNA. The chain is Ribosomal RNA large subunit methyltransferase H from Clostridium botulinum (strain Kyoto / Type A2).